A 98-amino-acid polypeptide reads, in one-letter code: Large ribosomal subunit protein bL28 (98 aa).

This sequence belongs to the bacterial ribosomal protein bL28 family.

The chain is Large ribosomal subunit protein bL28 from Rhizobium etli (strain ATCC 51251 / DSM 11541 / JCM 21823 / NBRC 15573 / CFN 42).